Here is a 442-residue protein sequence, read N- to C-terminus: Glycoprotein endo-alpha-1,2-mannosidase-like protein (442 aa).

Over 1–8 (MNRLRRKA) the chain is Cytoplasmic. Residues 9–29 (CVALLLFTLFIFGTMMGLRTL) form a helical; Signal-anchor for type II membrane protein membrane-spanning segment. Over 30–442 (KPTDGFSDLA…FSKEKEQWLM (413 aa)) the chain is Lumenal.

Belongs to the glycosyl hydrolase 99 family.

It localises to the golgi apparatus membrane. This Danio rerio (Zebrafish) protein is Glycoprotein endo-alpha-1,2-mannosidase-like protein (maneal).